The following is a 26-amino-acid chain: Morintide mO4 (26 aa).

Positions 1-26 (NRLCCSQYGFCGTTSEYCSRVSGCQS) constitute a Chitin-binding type-1 domain. Cys4 and Cys18 are joined by a disulfide.

As to expression, seeds (at protein level).

Functionally, chitin-binding protein which functions in defense against chitin-containing fungal pathogens. The polypeptide is Morintide mO4 (Moringa oleifera (Horseradish tree)).